Here is a 464-residue protein sequence, read N- to C-terminus: Fumarate hydratase class II (464 aa).

Residues Ser-98–Thr-100, His-129–Asp-132, Ser-139–Asn-141, and Thr-187 contribute to the substrate site. The active-site Proton donor/acceptor is His-188. Residue Ser-318 is part of the active site. Residues Ser-319 and Lys-324–Asn-326 each bind substrate.

The protein belongs to the class-II fumarase/aspartase family. Fumarase subfamily. In terms of assembly, homotetramer.

The protein resides in the cytoplasm. It carries out the reaction (S)-malate = fumarate + H2O. Its pathway is carbohydrate metabolism; tricarboxylic acid cycle; (S)-malate from fumarate: step 1/1. In terms of biological role, involved in the TCA cycle. Catalyzes the stereospecific interconversion of fumarate to L-malate. The polypeptide is Fumarate hydratase class II (Pasteurella multocida (strain Pm70)).